A 292-amino-acid polypeptide reads, in one-letter code: MPWLQVRLAISPEQAETYEDALLEVGAVSVTFMDAEDQPIFEPELNTTPLWTHTHLLALFEADTNAEMALAHLSLLTGEELPEHSAEVIEDQDWERSWMDNFQPMCFGKRLWIVPSWHAAPQPDAVNLLLDPGLAFGTGTHPTTALCLEWLDGQDLKGCNVLDFGCGSGILAIAALLLGAEQAVGTDIDVQALEASRDNAGRNKIAAERFPLYLPEDLPHQQADVLVANILAGPLVSLAPQLASLVRTGGRLALSGILAEQGEEVAAAYADSFDLDPIANRDGWVRITGRRR.

Positions 144, 165, 187, and 229 each coordinate S-adenosyl-L-methionine.

This sequence belongs to the methyltransferase superfamily. PrmA family.

Its subcellular location is the cytoplasm. The enzyme catalyses L-lysyl-[protein] + 3 S-adenosyl-L-methionine = N(6),N(6),N(6)-trimethyl-L-lysyl-[protein] + 3 S-adenosyl-L-homocysteine + 3 H(+). Methylates ribosomal protein L11. This chain is Ribosomal protein L11 methyltransferase, found in Pseudomonas savastanoi pv. phaseolicola (strain 1448A / Race 6) (Pseudomonas syringae pv. phaseolicola (strain 1448A / Race 6)).